Here is a 101-residue protein sequence, read N- to C-terminus: Urinary protein 2 (101 aa).

The first 21 residues, 1–21 (MGKHILLLPLGLSLLMSSLLA), serve as a signal peptide directing secretion. The UPAR/Ly6 domain occupies 22 to 99 (LQCFRCTSFD…CSATPFCNMV (78 aa)). Disulfide bonds link Cys24/Cys51, Cys27/Cys36, Cys43/Cys70, Cys73/Cys89, and Cys90/Cys96. 2 N-linked (GlcNAc...) asparagine glycosylation sites follow: Asn67 and Asn74.

Post-translationally, N-glycosylated.

The protein localises to the secreted. In Rattus norvegicus (Rat), this protein is Urinary protein 2.